The following is a 594-amino-acid chain: Cryptochrome-2 (594 aa).

The Photolyase/cryptochrome alpha/beta domain maps to 21-150 (ASSVHWFRKG…EVVTENSHTL (130 aa)). Lys-29 participates in a covalent cross-link: Glycyl lysine isopeptide (Lys-Gly) (interchain with G-Cter in ubiquitin). A Phosphoserine modification is found at Ser-89. Glycyl lysine isopeptide (Lys-Gly) (interchain with G-Cter in ubiquitin) cross-links involve residues Lys-125 and Lys-241. Ser-265 carries the post-translational modification Phosphoserine; by MAPK. An FAD-binding site is contributed by Ser-270. At Ser-298 the chain carries Phosphoserine. Gln-307 is a binding site for FAD. Lys-347 participates in a covalent cross-link: Glycyl lysine isopeptide (Lys-Gly) (interchain with G-Cter in ubiquitin). Residues His-373 and 405–407 (DAD) contribute to the FAD site. The interval 389-488 (WVSWESGVRV…IIGVDYPRPI (100 aa)) is required for inhibition of CLOCK-BMAL1-mediated transcription. Glycyl lysine isopeptide (Lys-Gly) (interchain with G-Cter in ubiquitin) cross-links involve residues Lys-474 and Lys-503. A disordered region spans residues 532–594 (VAEPGSSQAG…PAQEPPSKDS (63 aa)). Residues 536 to 547 (GSSQAGSISNTG) show a composition bias toward polar residues. Ser-553 is subject to Phosphoserine; by GSK3-beta. Ser-557 bears the Phosphoserine; by DYRK1A and MAPK mark.

This sequence belongs to the DNA photolyase class-1 family. As to quaternary structure, component of the circadian core oscillator, which includes the CRY proteins, CLOCK or NPAS2, BMAL1 or BMAL2, CSNK1D and/or CSNK1E, TIMELESS, and the PER proteins. Interacts with TIMELESS. Interacts directly with PER1, PER2 and PER3; interaction with PER2 inhibits its ubiquitination and vice versa. Interacts with CLOCK-BMAL1. Interacts with CLOCK. Interacts with BMAL1. Interacts with NFIL3. Interacts with FBXL3 and FBXL21. FBXL3, PER2 and the cofactor FAD compete for overlapping binding sites. FBXL3 cannot bind CRY2 that interacts already with PER2 or that contains bound FAD. Interacts with PPP5C (via TPR repeats); the interaction down-regulates the PPP5C phosphatase activity on CSNK1E. Interacts with nuclear receptors AR and NR3C1/GR; the interaction is ligand dependent. Interacts with PRKDC and CIART. Interacts with DDB1, USP7 and TARDBP. Interacts with HNF4A and PPARA. Interacts with PPARD (via domain NR LBD) and NR1I2 (via domain NR LBD) in a ligand-dependent manner. Interacts with PPARG, NR1I3 and VDR in a ligand-dependent manner. FAD is required as a cofactor. It depends on (6R)-5,10-methylene-5,6,7,8-tetrahydrofolate as a cofactor. In terms of processing, phosphorylation on Ser-265 by MAPK is important for the inhibition of CLOCK-BMAL1-mediated transcriptional activity. Phosphorylation by CSKNe requires interaction with PER1 or PER2. Phosphorylated in a circadian manner at Ser-553 and Ser-557 in the suprachiasmatic nucleus (SCN) and liver. Phosphorylation at Ser-557 by DYRK1A promotes subsequent phosphorylation at Ser-553 by GSK3-beta: the two-step phosphorylation at the neighboring Ser residues leads to its proteasomal degradation. Ubiquitinated by the SCF(FBXL3) and SCF(FBXL21) complexes, regulating the balance between degradation and stabilization. The SCF(FBXL3) complex is mainly nuclear and mediates ubiquitination and subsequent degradation of CRY2. In contrast, cytoplasmic SCF(FBXL21) complex-mediated ubiquitination leads to stabilize CRY2 and counteract the activity of the SCF(FBXL3) complex. The SCF(FBXL3) and SCF(FBXL21) complexes probably mediate ubiquitination at different Lys residues. The SCF(FBXL3) complex recognizes and binds CRY2 phosphorylated at Ser-553 and Ser-557. Ubiquitination may be inhibited by PER2. Deubiquitinated by USP7. As to expression, expressed in all tissues examined including heart, cerebellum, cerebral cortex, lung, liver, muscle, kidney and ovary. Highest levels in heart, liver and ovary. Highly expressed in the suprachiasmatic nucleus (SCN).

The protein resides in the cytoplasm. It is found in the nucleus. Its function is as follows. Transcriptional repressor which forms a core component of the circadian clock. The circadian clock, an internal time-keeping system, regulates various physiological processes through the generation of approximately 24 hour circadian rhythms in gene expression, which are translated into rhythms in metabolism and behavior. It is derived from the Latin roots 'circa' (about) and 'diem' (day) and acts as an important regulator of a wide array of physiological functions including metabolism, sleep, body temperature, blood pressure, endocrine, immune, cardiovascular, and renal function. Consists of two major components: the central clock, residing in the suprachiasmatic nucleus (SCN) of the brain, and the peripheral clocks that are present in nearly every tissue and organ system. Both the central and peripheral clocks can be reset by environmental cues, also known as Zeitgebers (German for 'timegivers'). The predominant Zeitgeber for the central clock is light, which is sensed by retina and signals directly to the SCN. The central clock entrains the peripheral clocks through neuronal and hormonal signals, body temperature and feeding-related cues, aligning all clocks with the external light/dark cycle. Circadian rhythms allow an organism to achieve temporal homeostasis with its environment at the molecular level by regulating gene expression to create a peak of protein expression once every 24 hours to control when a particular physiological process is most active with respect to the solar day. Transcription and translation of core clock components (CLOCK, NPAS2, BMAL1, BMAL2, PER1, PER2, PER3, CRY1 and CRY2) plays a critical role in rhythm generation, whereas delays imposed by post-translational modifications (PTMs) are important for determining the period (tau) of the rhythms (tau refers to the period of a rhythm and is the length, in time, of one complete cycle). A diurnal rhythm is synchronized with the day/night cycle, while the ultradian and infradian rhythms have a period shorter and longer than 24 hours, respectively. Disruptions in the circadian rhythms contribute to the pathology of cardiovascular diseases, cancer, metabolic syndromes and aging. A transcription/translation feedback loop (TTFL) forms the core of the molecular circadian clock mechanism. Transcription factors, CLOCK or NPAS2 and BMAL1 or BMAL2, form the positive limb of the feedback loop, act in the form of a heterodimer and activate the transcription of core clock genes and clock-controlled genes (involved in key metabolic processes), harboring E-box elements (5'-CACGTG-3') within their promoters. The core clock genes: PER1/2/3 and CRY1/2 which are transcriptional repressors form the negative limb of the feedback loop and interact with the CLOCK|NPAS2-BMAL1|BMAL2 heterodimer inhibiting its activity and thereby negatively regulating their own expression. This heterodimer also activates nuclear receptors NR1D1/2 and RORA/B/G, which form a second feedback loop and which activate and repress BMAL1 transcription, respectively. CRY1 and CRY2 have redundant functions but also differential and selective contributions at least in defining the pace of the SCN circadian clock and its circadian transcriptional outputs. Less potent transcriptional repressor in cerebellum and liver than CRY1, though less effective in lengthening the period of the SCN oscillator. Seems to play a critical role in tuning SCN circadian period by opposing the action of CRY1. With CRY1, dispensable for circadian rhythm generation but necessary for the development of intercellular networks for rhythm synchrony. May mediate circadian regulation of cAMP signaling and gluconeogenesis by blocking glucagon-mediated increases in intracellular cAMP concentrations and in CREB1 phosphorylation. Besides its role in the maintenance of the circadian clock, is also involved in the regulation of other processes. Plays a key role in glucose and lipid metabolism modulation, in part, through the transcriptional regulation of genes involved in these pathways, such as LEP or ACSL4. Represses glucocorticoid receptor NR3C1/GR-induced transcriptional activity by binding to glucocorticoid response elements (GREs). Represses the CLOCK-BMAL1 induced transcription of BHLHE40/DEC1 and NAMPT. Represses PPARD and its target genes in the skeletal muscle and limits exercise capacity. Represses the transcriptional activity of NR1I2. The chain is Cryptochrome-2 (Cry2) from Rattus norvegicus (Rat).